The chain runs to 247 residues: Phycobilisome rod-core linker polypeptide CpcG2 (247 aa).

Residues S11–R189 form the PBS-linker domain. A disordered region spans residues P223 to R247.

The protein belongs to the phycobilisome linker protein family. In terms of assembly, part of the phycobilisome, a hemidiscoidal structure that is composed of two distinct substructures: a core complex and a number of rods radiating from the core.

The protein localises to the cellular thylakoid membrane. Rod-core linker protein required for attachment of phycocyanin to allophycocyanin in cores of phycobilisomes. Its function is as follows. Linker polypeptides determine the state of aggregation and the location of the disk-shaped phycobiliprotein units within the phycobilisome and modulate their spectroscopic properties in order to mediate a directed and optimal energy transfer. The protein is Phycobilisome rod-core linker polypeptide CpcG2 of Nostoc sp. (strain PCC 7120 / SAG 25.82 / UTEX 2576).